A 722-amino-acid polypeptide reads, in one-letter code: MSWVRFTKTGVAVVATSAAAVLALDMTNERRFQRQVKDHFRTVHADRLAELNKRAPSALPTRKDILTNLSKGEEFDVLIIGGGATGAGVALDAQTRGLKTALVELDDFSSGTSSRSTKLIHGGVRYLQAAIMKLDLEQYRMVKEALFERHNLLEIAPHLSSPLPIMLPIYKLWQVPYYWSGIKAYDFVSGKRVLKNSFFINKSQALERFPMLRNESLKGALIYYDGQHNDARMNLAIILTAIRHGAACANHVRVEKLNKDETGKVIGAHVRDMVTGGEWDIKAKAVINATGPFTDSIRLMGDPETARPICAPSSGVHITLPGYYSPSNTGLLDPDTSDGRVIFFLPWERMTIAGTTDAPSDVTLSPQPTDHDIEFILQEIRGYLSKDVSVRRGDVMSAWSGLRPLVRDPNKKDTKSLARNHIIEVGKSGLITIAGGKWTTYRHMAEETVDRVVEVHGLKTENGCVTPGLLLEGAHDWNSLQYIHLVQDYGMEVDVAQHLSNTYGDRAFVVARMCKMTGKRWPIVGQRLHPEFPYLDAEVRYAVREYACTAIDVIARRMRLAFLNTYAAHEVLPDVVRVMGQELGWSSAEQRAQLEKARTFIDMEMGQNAKQTAVSNVALNLTKEEMQRAKERFQQLDKDRKGHITVNDLRKHFREHNQKIDERVLHELLNEVDLNKNGEIEIAEFFQLYSGLKGGQLTGNRLVGYLDEIHGTPSVNRACGGI.

Residues 1-43 constitute a mitochondrion transit peptide; that stretch reads MSWVRFTKTGVAVVATSAAAVLALDMTNERRFQRQVKDHFRTV. 76–104 is a binding site for FAD; that stretch reads DVLIIGGGATGAGVALDAQTRGLKTALVE. EF-hand domains lie at 624–659 and 660–695; these read EEMQ…HNQK and IDER…LKGG. Asp-673, Asn-675, Asn-677, Glu-679, and Glu-684 together coordinate Ca(2+).

This sequence belongs to the FAD-dependent glycerol-3-phosphate dehydrogenase family. The cofactor is FAD.

The protein localises to the mitochondrion. It catalyses the reaction a quinone + sn-glycerol 3-phosphate = dihydroxyacetone phosphate + a quinol. Its pathway is polyol metabolism; glycerol degradation via glycerol kinase pathway; glycerone phosphate from sn-glycerol 3-phosphate (anaerobic route): step 1/1. Its activity is regulated as follows. Calcium-binding enhances the activity of the enzyme. The polypeptide is Probable glycerol-3-phosphate dehydrogenase, mitochondrial (Caenorhabditis elegans).